The following is a 559-amino-acid chain: Glycerol kinase (559 aa).

Residue T20 coordinates ADP. The ATP site is built by T20, S21, and S22. Sn-glycerol 3-phosphate is bound at residue T20. R24 lines the ADP pocket. 3 residues coordinate sn-glycerol 3-phosphate: R94, E95, and Y148. Residues R94, E95, and Y148 each coordinate glycerol. Residue G252 coordinates beta-D-fructose 1,6-bisphosphate. Residue D265 participates in sn-glycerol 3-phosphate binding. 2 residues coordinate glycerol: D265 and Q266. ADP-binding residues include T287, G332, G433, and N437. T287, G332, and G433 together coordinate ATP. E501 is a Zn(2+) binding site. Residues 532–552 traverse the membrane as a helical segment; it reads IFCSLPLGFFIVSSMVMLIGA.

Belongs to the FGGY kinase family.

It is found in the mitochondrion outer membrane. Its subcellular location is the nucleus. The protein localises to the cytoplasm. It localises to the cytosol. The enzyme catalyses glycerol + ATP = sn-glycerol 3-phosphate + ADP + H(+). It participates in polyol metabolism; glycerol degradation via glycerol kinase pathway; sn-glycerol 3-phosphate from glycerol: step 1/1. In terms of biological role, kinase that plays a key role in glycerol metabolism, catalyzing its phosphorylation to produce sn-glycerol 3-phosphate. Sn-glycerol 3-phosphate is a crucial intermediate in various metabolic pathways, such as the synthesis of glycerolipids and triglycerides, glycogenesis, glycolysis and gluconeogenesis. In Rattus norvegicus (Rat), this protein is Glycerol kinase.